The primary structure comprises 861 residues: Seed linoleate 9S-lipoxygenase-3 (861 aa).

A PLAT domain is found at 41 to 166; sequence QGFDILGSTV…HHKIDRIFFA (126 aa). The Lipoxygenase domain maps to 169–861; that stretch reads TYLPSETPAP…FRGIPNSISI (693 aa). The interval 215 to 257 is disordered; the sequence is NPDSGENHARPVLGGSETYPYPRRGRTGRKPTRKDPNSESRSD. Residues 237 to 246 show a composition bias toward basic residues; it reads RRGRTGRKPT. The segment covering 247-257 has biased composition (basic and acidic residues); it reads RKDPNSESRSD. His522, His527, His713, Asn717, and Ile861 together coordinate Fe cation.

This sequence belongs to the lipoxygenase family. It depends on Fe cation as a cofactor.

The protein localises to the cytoplasm. It catalyses the reaction (9Z,12Z)-octadecadienoate + O2 = (9S)-hydroperoxy-(10E,12Z)-octadecadienoate. The protein operates within lipid metabolism; oxylipin biosynthesis. Plant lipoxygenase may be involved in a number of diverse aspects of plant physiology including growth and development, pest resistance, and senescence or responses to wounding. It catalyzes the hydroperoxidation of lipids containing a cis,cis-1,4-pentadiene structure. The protein is Seed linoleate 9S-lipoxygenase-3 (LOX1.3) of Pisum sativum (Garden pea).